A 484-amino-acid polypeptide reads, in one-letter code: Putative transporter B0252.3 (484 aa).

11 consecutive transmembrane segments (helical) span residues 43–63 (ILTCILVCGLAWSPLAFTGLC), 95–115 (STTTFYMVGNMIGGMFIPPLA), 121–141 (LPVFVATVLLMAVGGMISAFS), 144–164 (IMMFCIMRMIHGIFYTAAGLA), 183–203 (VYFGVMWVVGACFLGLLAYIL), 208–228 (YLMFCISVPNIFVALLIYMTV), 286–306 (MFIVYVLVMTYIWIVDTFIYF), 321–341 (LNFVLMSLVEAPAYIFSPIFM), 348–368 (VLISGTHIIAGLSFLGIVLSS), 373–393 (IHFWLLGKFAISCSFMSIYMF), and 433–453 (LAPAITLSLIAVSGGLLTLIL).

Belongs to the major facilitator superfamily. Sugar transporter (TC 2.A.1.1) family.

It is found in the membrane. The protein is Putative transporter B0252.3 of Caenorhabditis elegans.